Here is a 220-residue protein sequence, read N- to C-terminus: Deoxyribose-phosphate aldolase (220 aa).

Catalysis depends on aspartate 89, which acts as the Proton donor/acceptor. Lysine 150 acts as the Schiff-base intermediate with acetaldehyde in catalysis. Lysine 182 serves as the catalytic Proton donor/acceptor.

It belongs to the DeoC/FbaB aldolase family. DeoC type 1 subfamily.

Its subcellular location is the cytoplasm. It carries out the reaction 2-deoxy-D-ribose 5-phosphate = D-glyceraldehyde 3-phosphate + acetaldehyde. The protein operates within carbohydrate degradation; 2-deoxy-D-ribose 1-phosphate degradation; D-glyceraldehyde 3-phosphate and acetaldehyde from 2-deoxy-alpha-D-ribose 1-phosphate: step 2/2. Functionally, catalyzes a reversible aldol reaction between acetaldehyde and D-glyceraldehyde 3-phosphate to generate 2-deoxy-D-ribose 5-phosphate. The protein is Deoxyribose-phosphate aldolase of Mycoplasmoides pirum (Mycoplasma pirum).